We begin with the raw amino-acid sequence, 1195 residues long: MPETSVQNPLRLSENENTRSMFLSASQQQRPSATPSFPRLVRNTTANLSLSDFQVLNPSSKRQNSNSVYDDINSSKRRISRPRFSDIEGKNNDHTYPERTTVKESEKNPSPRYVSSSKRALKRENSVGITQSSALISKSFSENGGSIAHEKWSPENMIKPLNVSQNSLAFVDAGSDEQSKSEIVGGFQRKSNNSQEINDKDNSARDQDFNNSGNNNNNNNHSSNNNDNNNNNNDDNNNNNNSNSRDNNNNSDDSNEREENDSCKPASNKRSGIALIQKLQELYKVIVKQEIELQERCSQLTNSQTTELKSLWTIYKINTDLVNNYVTFITTALLPSQPPHDLVIGQEIVEIYRIERRLWVYGTITFLDVLKNFSNFMDPEVCCQFITHVFVSLSTMISDIPSKYSITWLQRLGDLSRMAIALYPSSFIDWKLSAEHWYTEAMKYIYNHGKLYYHMSTVQQNTLEAFVNLGKSVFCQETFTPSPQYMQLVIDNIYQRAFVERNNGNLRNSLLIEYLKHSEAMLLPSFLESPDLQNVVLSYFIEKFGIDANGCNIFNAEDMFVQNPDFFKYFFRHGPSFAQSHILQIVGFGEPKNPFAILFELPKYLKERKDKKERKKSSNNDSSVTESSTGNSRNDNEDDDEIMSSTTSISDHDLLAEFFNDIDTLRRPILPSMLTNEAWLETLKFLNMTSLKCGIIVLRKFLHGPLGIALPHILPWIYFIISICLKSSQLSDPVSKEFWMIIVKRAFPWDTMVTFMNVLIVYLLDNQTSNSIIGDLCDDYDKLSLSELLELFNEGEELPEILGCWGTLWFDTICEKNTHSISSEDNFQEIGIKDYMALDSPTDGIIFDEKDENGEKFWKRACRTIFLFRELSRSFPIGVIIRNDPLIYRSSFQNTNILGSLVFKLEPLCNIHNNIPVLGALESIIDISEARSENNTDLHAVPELSVNEGDNIFHYVGYKKLRADYTCFDKNGEFLSASLYTTWYVPNSNNTNIEDNINYNSEKENEGLFLECIKSDYPEIDFKTTYFVFDATSWLRHSARIFKLAQNRLLRFAICLTTFQELRFLRKSKDENVMEAATRGIITIRQLYYENKVLPLRFTGNVATHIEENLEFEEQITWRTHVDEFVIESVMKAQEKLESASEPRLSPRRFNYVVLISDDDAMKKKAEEKEIKTLSTRFVFSLCTKLGEQRHLCTD.

Composition is skewed to polar residues over residues methionine 1–leucine 10, threonine 18–proline 35, and valine 55–valine 68. 4 disordered regions span residues methionine 1–proline 38, valine 55–threonine 130, serine 179–asparagine 268, and aspartate 610–methionine 643. Composition is skewed to basic and acidic residues over residues arginine 83–proline 109 and isoleucine 197–aspartate 208. 2 stretches are compositionally biased toward low complexity: residues asparagine 210–aspartate 252 and asparagine 619–threonine 629. One can recognise a PINc domain in the interval threonine 1025–lysine 1164.

Transiently interacts with PEX14.

It localises to the cytoplasm. Its subcellular location is the nucleus. The protein localises to the peroxisome. Functionally, may be involved in the regulation of gene expression responses of environment-sensing pathways. The sequence is that of EST/SMG-like protein 2 from Saccharomyces cerevisiae (strain ATCC 204508 / S288c) (Baker's yeast).